The sequence spans 123 residues: Holo-[acyl-carrier-protein] synthase (123 aa).

2 residues coordinate Mg(2+): aspartate 8 and glutamate 56.

The protein belongs to the P-Pant transferase superfamily. AcpS family. The cofactor is Mg(2+).

Its subcellular location is the cytoplasm. The enzyme catalyses apo-[ACP] + CoA = holo-[ACP] + adenosine 3',5'-bisphosphate + H(+). Transfers the 4'-phosphopantetheine moiety from coenzyme A to a Ser of acyl-carrier-protein. The polypeptide is Holo-[acyl-carrier-protein] synthase (Clostridium beijerinckii (strain ATCC 51743 / NCIMB 8052) (Clostridium acetobutylicum)).